Reading from the N-terminus, the 285-residue chain is NAD kinase (285 aa).

The active-site Proton acceptor is the D66. NAD(+) is bound by residues 66–67 (DG), 137–138 (ND), R148, R165, D167, and 178–183 (TAYSMS).

It belongs to the NAD kinase family. A divalent metal cation serves as cofactor.

The protein resides in the cytoplasm. The catalysed reaction is NAD(+) + ATP = ADP + NADP(+) + H(+). Its function is as follows. Involved in the regulation of the intracellular balance of NAD and NADP, and is a key enzyme in the biosynthesis of NADP. Catalyzes specifically the phosphorylation on 2'-hydroxyl of the adenosine moiety of NAD to yield NADP. The polypeptide is NAD kinase (Chlorobium luteolum (strain DSM 273 / BCRC 81028 / 2530) (Pelodictyon luteolum)).